A 516-amino-acid chain; its full sequence is MNVFFMFSLLFLAALGSCAHDRNPLEECFRETDYEEFLEIAKNGLTATSNPKRVVIVGAGMAGLSAAYVLAGAGHQVTVLEASERVGGRVRTYRKKDWYANLGPMRLPTKHRIVREYIKKFDLKLNEFSQENENAWYFIKNIRKRVREVKNNPGLLEYPVKPSEEGKSAAQLYVESLRKVVKELKRTNCKYILDKYDTYSTKEYLLKEGNLSPGAVDMIGDLLNEDSGYYVSFIESLKHDDIFGYEKRFDEIVGGMDQLPTSMYEAIKEKVQVHFNARVIEIQQNDREATVTYQTSANEMSSVTADYVIVCTTSRAARRIKFEPPLPPKKAHALRSVHYRSGTKIFLTCKKKFWEDDGIRGGKSTTDLPSRFIYYPNHNFTSGVGVIIAYGIGDDANFFQALDFKDCADIVINDLSLIHQLPKEDIQTFCRPSMIQRWSLDKYAMGGITTFTPYQFQHFSEALTAPFKRIYFAGEYTAQFHGWIDSTIKSGLTAARDVNRASENPSGIHLSNDNEF.

Residues 1–18 (MNVFFMFSLLFLAALGSC) form the signal peptide. A disulfide bridge connects residues Cys28 and Cys189. Residues 61 to 62 (MA), 81 to 82 (EA), Arg89, and 103 to 106 (GPMR) contribute to the FAD site. Residues Arg106 and His239 each contribute to the substrate site. Position 279 (Val279) interacts with FAD. An intrachain disulfide couples Cys349 to Cys430. An N-linked (GlcNAc...) asparagine glycan is attached at Asn379. Tyr390 serves as a coordination point for substrate. Residues Glu475 and 482-487 (GWIDST) contribute to the FAD site. 482–483 (GW) provides a ligand contact to substrate.

The protein belongs to the flavin monoamine oxidase family. FIG1 subfamily. Homodimer; non-covalently linked. The cofactor is FAD. In terms of tissue distribution, expressed by the venom gland.

It is found in the secreted. The catalysed reaction is an L-alpha-amino acid + O2 + H2O = a 2-oxocarboxylate + H2O2 + NH4(+). Catalyzes an oxidative deamination of predominantly hydrophobic and aromatic L-amino acids, thus producing hydrogen peroxide that may contribute to the diverse toxic effects of this enzyme. Exhibits diverse biological activities, such as hemolysis, edema, hemorrhage, apoptosis, antibacterial and antiparasitic activities, as well as regulation of platelet aggregation. Effects of snake L-amino oxidases on platelets are controversial, since they either induce aggregation or inhibit agonist-induced aggregation. These different effects are probably due to different experimental conditions. This is L-amino-acid oxidase from Crotalus adamanteus (Eastern diamondback rattlesnake).